A 233-amino-acid polypeptide reads, in one-letter code: Protein-methionine-sulfoxide reductase heme-binding subunit MsrQ (233 aa).

Transmembrane regions (helical) follow at residues 13-33 (IKAA…HGLW), 44-64 (ALTR…LCVS), 81-101 (MLGL…LWLD), 117-137 (PFIT…LTSS), 151-171 (SLHR…LWLV), and 174-194 (VALL…GWRV). In terms of domain architecture, Ferric oxidoreductase spans 50–164 (GIWTLNFLFL…AVYAVAILGV (115 aa)).

This sequence belongs to the MsrQ family. In terms of assembly, heterodimer of a catalytic subunit (MsrP) and a heme-binding subunit (MsrQ).

It localises to the cell inner membrane. Its function is as follows. Part of the MsrPQ system that repairs oxidized periplasmic proteins containing methionine sulfoxide residues (Met-O), using respiratory chain electrons. Thus protects these proteins from oxidative-stress damage caused by reactive species of oxygen and chlorine generated by the host defense mechanisms. MsrPQ is essential for the maintenance of envelope integrity under bleach stress, rescuing a wide series of structurally unrelated periplasmic proteins from methionine oxidation. MsrQ provides electrons for reduction to the reductase catalytic subunit MsrP, using the quinone pool of the respiratory chain. Probably involved in protection against reactive chlorine species (RCS) generated by chlorite and hypochlorite. This chain is Protein-methionine-sulfoxide reductase heme-binding subunit MsrQ, found in Azospira oryzae (strain ATCC BAA-33 / DSM 13638 / PS) (Dechlorosoma suillum).